Here is a 440-residue protein sequence, read N- to C-terminus: Phosphatidylglycerol--prolipoprotein diacylglyceryl transferase (440 aa).

A run of 4 helical transmembrane segments spans residues 21–41 (VPIR…LLIG), 53–73 (GVIY…GRLY), 96–116 (IWDG…GAWI), and 122–142 (GIPL…AQAI). Arg-144 is a binding site for a 1,2-diacyl-sn-glycero-3-phospho-(1'-sn-glycerol). Helical transmembrane passes span 189–209 (VALV…LIFV) and 256–276 (INSF…MAAP). The interval 280-440 (EDPESLRGNQ…ARLRDRLSGR (161 aa)) is disordered. The span at 299-330 (EPATVAATTEAATEGVAAPADGAEAAGADATA) shows a compositional bias: low complexity. Basic and acidic residues predominate over residues 332 to 346 (RPEESAEPDVEKPES). Residues 347-417 (EETEAEAAEE…PEQPVAEEPE (71 aa)) are compositionally biased toward acidic residues. Positions 424–440 (ETKRRWGARLRDRLSGR) are enriched in basic and acidic residues.

Belongs to the Lgt family.

It is found in the cell membrane. The enzyme catalyses L-cysteinyl-[prolipoprotein] + a 1,2-diacyl-sn-glycero-3-phospho-(1'-sn-glycerol) = an S-1,2-diacyl-sn-glyceryl-L-cysteinyl-[prolipoprotein] + sn-glycerol 1-phosphate + H(+). It participates in protein modification; lipoprotein biosynthesis (diacylglyceryl transfer). Functionally, catalyzes the transfer of the diacylglyceryl group from phosphatidylglycerol to the sulfhydryl group of the N-terminal cysteine of a prolipoprotein, the first step in the formation of mature lipoproteins. This is Phosphatidylglycerol--prolipoprotein diacylglyceryl transferase from Mycobacterium avium (strain 104).